We begin with the raw amino-acid sequence, 118 residues long: MKLRANRVGEQMKKELGDIISRKIKDPRIGFVTVTDVQVSGDLQIAKVYISVLGDEEQKENTLKGLAKAKGFIRSEIGQRIRLRKTPEITFEFDESIGYGHRIDTLLHEINKDGKREE.

It belongs to the RbfA family. In terms of assembly, monomer. Binds 30S ribosomal subunits, but not 50S ribosomal subunits or 70S ribosomes.

The protein resides in the cytoplasm. Its function is as follows. One of several proteins that assist in the late maturation steps of the functional core of the 30S ribosomal subunit. Associates with free 30S ribosomal subunits (but not with 30S subunits that are part of 70S ribosomes or polysomes). Required for efficient processing of 16S rRNA. May interact with the 5'-terminal helix region of 16S rRNA. This is Ribosome-binding factor A from Bacillus cereus (strain B4264).